The chain runs to 494 residues: Aspartyl/glutamyl-tRNA(Asn/Gln) amidotransferase subunit B (494 aa).

It belongs to the GatB/GatE family. GatB subfamily. Heterotrimer of A, B and C subunits.

It carries out the reaction L-glutamyl-tRNA(Gln) + L-glutamine + ATP + H2O = L-glutaminyl-tRNA(Gln) + L-glutamate + ADP + phosphate + H(+). It catalyses the reaction L-aspartyl-tRNA(Asn) + L-glutamine + ATP + H2O = L-asparaginyl-tRNA(Asn) + L-glutamate + ADP + phosphate + 2 H(+). In terms of biological role, allows the formation of correctly charged Asn-tRNA(Asn) or Gln-tRNA(Gln) through the transamidation of misacylated Asp-tRNA(Asn) or Glu-tRNA(Gln) in organisms which lack either or both of asparaginyl-tRNA or glutaminyl-tRNA synthetases. The reaction takes place in the presence of glutamine and ATP through an activated phospho-Asp-tRNA(Asn) or phospho-Glu-tRNA(Gln). The sequence is that of Aspartyl/glutamyl-tRNA(Asn/Gln) amidotransferase subunit B from Nitrobacter winogradskyi (strain ATCC 25391 / DSM 10237 / CIP 104748 / NCIMB 11846 / Nb-255).